The primary structure comprises 805 residues: Sucrose synthase (805 aa).

The interval 275 to 752 (MVFNVVILSP…GLKRIEEKYT (478 aa)) is GT-B glycosyltransferase.

Belongs to the glycosyltransferase 1 family. Plant sucrose synthase subfamily. In terms of tissue distribution, expression is at least 10-fold higher in tubers compared to photosynthetically active tissues.

The catalysed reaction is an NDP-alpha-D-glucose + D-fructose = a ribonucleoside 5'-diphosphate + sucrose + H(+). Sucrose-cleaving enzyme that provides UDP-glucose and fructose for various metabolic pathways. The protein is Sucrose synthase of Solanum tuberosum (Potato).